The primary structure comprises 214 residues: 3,4-dihydroxy-2-butanone 4-phosphate synthase (214 aa).

D-ribulose 5-phosphate-binding positions include 37-38 (RE), Asp42, 150-154 (RRGHT), and Glu174. Glu38 provides a ligand contact to Mg(2+). Position 153 (His153) interacts with Mg(2+).

It belongs to the DHBP synthase family. Homodimer. It depends on Mg(2+) as a cofactor. Requires Mn(2+) as cofactor.

The enzyme catalyses D-ribulose 5-phosphate = (2S)-2-hydroxy-3-oxobutyl phosphate + formate + H(+). It participates in cofactor biosynthesis; riboflavin biosynthesis; 2-hydroxy-3-oxobutyl phosphate from D-ribulose 5-phosphate: step 1/1. Functionally, catalyzes the conversion of D-ribulose 5-phosphate to formate and 3,4-dihydroxy-2-butanone 4-phosphate. This is 3,4-dihydroxy-2-butanone 4-phosphate synthase from Histophilus somni (strain 2336) (Haemophilus somnus).